A 163-amino-acid chain; its full sequence is Nucleotide-binding protein YajQ (163 aa).

This sequence belongs to the YajQ family.

Its function is as follows. Nucleotide-binding protein. This is Nucleotide-binding protein YajQ from Salmonella paratyphi A (strain ATCC 9150 / SARB42).